We begin with the raw amino-acid sequence, 279 residues long: Probable endonuclease 4 (279 aa).

Residues H67, H107, E144, D177, H180, H214, D227, H229, and E259 each contribute to the Zn(2+) site.

Belongs to the AP endonuclease 2 family. Requires Zn(2+) as cofactor.

It catalyses the reaction Endonucleolytic cleavage to 5'-phosphooligonucleotide end-products.. Endonuclease IV plays a role in DNA repair. It cleaves phosphodiester bonds at apurinic or apyrimidinic (AP) sites, generating a 3'-hydroxyl group and a 5'-terminal sugar phosphate. This is Probable endonuclease 4 from Sulfurihydrogenibium sp. (strain YO3AOP1).